The following is a 335-amino-acid chain: Ferrochelatase (335 aa).

Residues H194 and E275 each coordinate Fe cation.

It belongs to the ferrochelatase family.

The protein localises to the cytoplasm. It catalyses the reaction heme b + 2 H(+) = protoporphyrin IX + Fe(2+). The protein operates within porphyrin-containing compound metabolism; protoheme biosynthesis; protoheme from protoporphyrin-IX: step 1/1. Functionally, catalyzes the ferrous insertion into protoporphyrin IX. In Sodalis glossinidius (strain morsitans), this protein is Ferrochelatase.